Here is a 345-residue protein sequence, read N- to C-terminus: Protein RecA (345 aa).

66-73 (GPESSGKT) lines the ATP pocket.

It belongs to the RecA family.

It is found in the cytoplasm. Its function is as follows. Can catalyze the hydrolysis of ATP in the presence of single-stranded DNA, the ATP-dependent uptake of single-stranded DNA by duplex DNA, and the ATP-dependent hybridization of homologous single-stranded DNAs. It interacts with LexA causing its activation and leading to its autocatalytic cleavage. In Frankia casuarinae (strain DSM 45818 / CECT 9043 / HFP020203 / CcI3), this protein is Protein RecA.